A 604-amino-acid polypeptide reads, in one-letter code: Serine/threonine-protein phosphatase 2B catalytic subunit A2 (604 aa).

Residues 21–48 (NKTERPQSSTTPIDSKASTVAAANSTAT) are disordered. Phosphothreonine is present on Thr-31. The segment covering 35 to 48 (SKASTVAAANSTAT) has biased composition (low complexity). Positions 144, 146, and 172 each coordinate Fe cation. Zn(2+)-binding residues include Asp-172 and Asn-204. Residue His-205 is the Proton donor of the active site. Positions 253 and 359 each coordinate Zn(2+). Residues 470–497 (KKLPQAGKSEATPQPATSASPKHASILD) form a disordered region. Positions 480–489 (ATPQPATSAS) are enriched in polar residues. Phosphoserine is present on residues Ser-489 and Ser-520. A calmodulin-binding region spans residues 501 to 523 (RRKALRNKILAVAKVSRMYSVLR).

Belongs to the PPP phosphatase family. PP-2B subfamily. In terms of assembly, composed of two components (A and B), the A component is the catalytic subunit and the B component confers calcium sensitivity. Fe(3+) serves as cofactor. The cofactor is Zn(2+).

It carries out the reaction O-phospho-L-seryl-[protein] + H2O = L-seryl-[protein] + phosphate. It catalyses the reaction O-phospho-L-threonyl-[protein] + H2O = L-threonyl-[protein] + phosphate. Functionally, calcium-dependent, calmodulin-stimulated protein phosphatase. This subunit may have a role in the calmodulin activation of calcineurin. The polypeptide is Serine/threonine-protein phosphatase 2B catalytic subunit A2 (CMP2) (Saccharomyces cerevisiae (strain ATCC 204508 / S288c) (Baker's yeast)).